Consider the following 566-residue polypeptide: Arginine--tRNA ligase (566 aa).

The short motif at 120–130 (PNIAKPFHVGH) is the 'HIGH' region element.

The protein belongs to the class-I aminoacyl-tRNA synthetase family. As to quaternary structure, monomer.

The protein localises to the cytoplasm. The enzyme catalyses tRNA(Arg) + L-arginine + ATP = L-arginyl-tRNA(Arg) + AMP + diphosphate. The chain is Arginine--tRNA ligase from Clostridium kluyveri (strain NBRC 12016).